A 729-amino-acid polypeptide reads, in one-letter code: MLYQSETLQLHWLENGIAELVFDAPGSVNKLDTKTVANLGEALNVLEKQSELKGLLLRSAKTALIVGADITEFLSLFNAPPEKLHQWLVFANTIFNRLEDLPVPTISAINGYALGGGCECILATDFRIASPEARIGLPETKLGIMPGFGGSVRLPRLLGADSALEIIATGKDVTANDALKIGLVDAVVDPEKLVGSALTMLKQAIDGKLDWQAARRPKLEPLKLNPTEAAMCFTIAKGRVMQVAGKHYPAPLTAVKTIEAAAKFGRTEALNLETNSFVPLAGSNEARALVGIFLNDQYVKAQAKKLSKGVAAPKLAAVLGAGIMGGGIAYQSALKSVPVIMKDINENSLDLGMNEAAKLLNKQLERGKVDGLKMASILATIRPTLDYAGIERAQVIVEAVVENPKVKAAVLAEVEALIGEDTVLASNTSTIPIDQLAKSLKRPENFCGMHFFNPVHRMPLVEIIRGAKTSDKTLAAVVAYATQMGKTPIVVNDCPGFFVNRVLFPYLAGFGMLVRDGGDFHQIDKVMEKQFGWPMGPAYLLDVVGIDTAHHAQAVMAAGFPERMNKDYRDAVDVMFDNQRFGQKNGQGFYRYTQDAKGKPRKENDEQVDKLLAEISQPLQEFSDEDIIARTMIPMINEVVRCLEEGIIASAAEGDMALVYGLGFPPFHGGVFRYLDTLGSANYVEMAQRYAHLGALYHVPAGLRAKAEHNESYYPVSAALLDVSTNQPA.

The enoyl-CoA hydratase/isomerase stretch occupies residues 1-189 (MLYQSETLQL…KIGLVDAVVD (189 aa)). Aspartate 296 is a binding site for substrate. The interval 311–729 (AAPKLAAVLG…LLDVSTNQPA (419 aa)) is 3-hydroxyacyl-CoA dehydrogenase. NAD(+)-binding positions include methionine 324, aspartate 343, 400 to 402 (VVE), lysine 407, and serine 429. The active-site For 3-hydroxyacyl-CoA dehydrogenase activity is the histidine 450. Position 453 (asparagine 453) interacts with NAD(+). Substrate is bound by residues asparagine 500 and tyrosine 660.

This sequence in the N-terminal section; belongs to the enoyl-CoA hydratase/isomerase family. It in the C-terminal section; belongs to the 3-hydroxyacyl-CoA dehydrogenase family. As to quaternary structure, heterotetramer of two alpha chains (FadB) and two beta chains (FadA).

It carries out the reaction a (3S)-3-hydroxyacyl-CoA + NAD(+) = a 3-oxoacyl-CoA + NADH + H(+). It catalyses the reaction a (3S)-3-hydroxyacyl-CoA = a (2E)-enoyl-CoA + H2O. The catalysed reaction is a 4-saturated-(3S)-3-hydroxyacyl-CoA = a (3E)-enoyl-CoA + H2O. The enzyme catalyses (3S)-3-hydroxybutanoyl-CoA = (3R)-3-hydroxybutanoyl-CoA. It carries out the reaction a (3Z)-enoyl-CoA = a 4-saturated (2E)-enoyl-CoA. It catalyses the reaction a (3E)-enoyl-CoA = a 4-saturated (2E)-enoyl-CoA. It functions in the pathway lipid metabolism; fatty acid beta-oxidation. Functionally, involved in the aerobic and anaerobic degradation of long-chain fatty acids via beta-oxidation cycle. Catalyzes the formation of 3-oxoacyl-CoA from enoyl-CoA via L-3-hydroxyacyl-CoA. It can also use D-3-hydroxyacyl-CoA and cis-3-enoyl-CoA as substrate. The protein is Fatty acid oxidation complex subunit alpha of Yersinia pseudotuberculosis serotype O:1b (strain IP 31758).